The primary structure comprises 380 residues: L-lactate dehydrogenase (380 aa).

Residues 1–380 (MIISSPNDYR…TRDSLVGLPR (380 aa)) enclose the FMN hydroxy acid dehydrogenase domain. Tyrosine 24 contributes to the substrate binding site. Residues serine 106 and glutamine 127 each contribute to the FMN site. Tyrosine 129 contributes to the substrate binding site. Threonine 155 is a binding site for FMN. Residue arginine 164 participates in substrate binding. FMN is bound at residue lysine 251. Histidine 275 serves as the catalytic Proton acceptor. Arginine 278 lines the substrate pocket. An FMN-binding site is contributed by 306-330 (DSGIRTGLDVVRMLALGAKGVLLGR).

It belongs to the FMN-dependent alpha-hydroxy acid dehydrogenase family. It depends on FMN as a cofactor.

It localises to the cell inner membrane. The catalysed reaction is (S)-lactate + A = pyruvate + AH2. Functionally, catalyzes the conversion of L-lactate to pyruvate. Is coupled to the respiratory chain. This is L-lactate dehydrogenase from Azorhizobium caulinodans (strain ATCC 43989 / DSM 5975 / JCM 20966 / LMG 6465 / NBRC 14845 / NCIMB 13405 / ORS 571).